A 140-amino-acid chain; its full sequence is ATP synthase epsilon chain (140 aa).

This sequence belongs to the ATPase epsilon chain family. In terms of assembly, F-type ATPases have 2 components, CF(1) - the catalytic core - and CF(0) - the membrane proton channel. CF(1) has five subunits: alpha(3), beta(3), gamma(1), delta(1), epsilon(1). CF(0) has three main subunits: a, b and c.

The protein localises to the cell inner membrane. Produces ATP from ADP in the presence of a proton gradient across the membrane. This chain is ATP synthase epsilon chain, found in Nitrosococcus oceani (strain ATCC 19707 / BCRC 17464 / JCM 30415 / NCIMB 11848 / C-107).